A 125-amino-acid polypeptide reads, in one-letter code: Large ribosomal subunit protein bL12 (125 aa).

The protein belongs to the bacterial ribosomal protein bL12 family. As to quaternary structure, homodimer. Part of the ribosomal stalk of the 50S ribosomal subunit. Forms a multimeric L10(L12)X complex, where L10 forms an elongated spine to which 2 to 4 L12 dimers bind in a sequential fashion. Binds GTP-bound translation factors.

In terms of biological role, forms part of the ribosomal stalk which helps the ribosome interact with GTP-bound translation factors. Is thus essential for accurate translation. The polypeptide is Large ribosomal subunit protein bL12 (Coprothermobacter proteolyticus (strain ATCC 35245 / DSM 5265 / OCM 4 / BT)).